The following is a 632-amino-acid chain: tRNA uridine 5-carboxymethylaminomethyl modification enzyme MnmG (632 aa).

Position 13-18 (13-18 (GGGHAG)) interacts with FAD. An NAD(+)-binding site is contributed by 273–287 (GPRYCPSIEDKIHRF).

The protein belongs to the MnmG family. As to quaternary structure, homodimer. Heterotetramer of two MnmE and two MnmG subunits. Requires FAD as cofactor.

It localises to the cytoplasm. In terms of biological role, NAD-binding protein involved in the addition of a carboxymethylaminomethyl (cmnm) group at the wobble position (U34) of certain tRNAs, forming tRNA-cmnm(5)s(2)U34. The chain is tRNA uridine 5-carboxymethylaminomethyl modification enzyme MnmG from Psychrobacter cryohalolentis (strain ATCC BAA-1226 / DSM 17306 / VKM B-2378 / K5).